Reading from the N-terminus, the 298-residue chain is Enoyl-CoA hydratase AFT6-1 (298 aa).

The segment at M1–N39 is disordered.

This sequence belongs to the enoyl-CoA hydratase/isomerase family.

The enzyme catalyses a (3S)-3-hydroxyacyl-CoA = a (2E)-enoyl-CoA + H2O. It catalyses the reaction a 4-saturated-(3S)-3-hydroxyacyl-CoA = a (3E)-enoyl-CoA + H2O. It participates in mycotoxin biosynthesis. Enoyl-CoA hydratase; part of the gene clusters that mediate the biosynthesis of the host-selective toxins (HSTs) AF-toxins responsible for Alternaria black spot of strawberry disease by the strawberry pathotype. AF-toxin I and III are valine derivatives of 2,3-dyhydroxy-isovaleric acid and 2-hydroxy-isovaleric acid respectively, while AF II is an isoleucine derivative of 2-hydroxy-valeric acid. These derivatives are bound to a 9,10-epoxy-8-hydroxy-9-methyl-decatrienoic acid (EDA) moiety. On cellular level, AF-toxin affects plasma membrane of susceptible cells and cause a sudden increase in loss of K(+) after a few minutes of toxin treatment. The aldo-keto reductase AFTS1 catalyzes the conversion of 2-keto-isovaleric acid (2-KIV) to 2-hydroxy-isovaleric acid (2-HIV) by reduction of its ketone to an alcohol. The acyl-CoA ligase AFT1, the hydrolase AFT2 and the enoyl-CoA hydratases AFT3 and AFT6, but also the polyketide synthase AFT9, the acyl-CoA dehydrogenase AFT10, the cytochrome P450 monooxygenase AFT11 and the oxidoreductase AFT12 are all involved in the biosynthesis of the AK-, AF- and ACT-toxin common EDA structural moiety. The exact function of each enzyme, and of additional enzymes identified within the AF-toxin clusters have still to be determined. In Alternaria alternata (Alternaria rot fungus), this protein is Enoyl-CoA hydratase AFT6-1.